Reading from the N-terminus, the 47-residue chain is Large ribosomal subunit protein bL34 (47 aa).

The protein belongs to the bacterial ribosomal protein bL34 family.

This chain is Large ribosomal subunit protein bL34, found in Mycobacteroides abscessus (strain ATCC 19977 / DSM 44196 / CCUG 20993 / CIP 104536 / JCM 13569 / NCTC 13031 / TMC 1543 / L948) (Mycobacterium abscessus).